The primary structure comprises 332 residues: 2,3-diketo-L-gulonate reductase (332 aa).

The active-site Proton donor is the histidine 44. Residues 168–174 (ITMVDMS), 224–225 (WK), and 304–306 (GHE) contribute to the NAD(+) site.

Belongs to the LDH2/MDH2 oxidoreductase family. DlgD subfamily. Homodimer.

The protein localises to the cytoplasm. It catalyses the reaction 3-dehydro-L-gulonate + NAD(+) = 2,3-dioxo-L-gulonate + NADH + H(+). The catalysed reaction is 3-dehydro-L-gulonate + NADP(+) = 2,3-dioxo-L-gulonate + NADPH + H(+). In terms of biological role, catalyzes the reduction of 2,3-diketo-L-gulonate in the presence of NADH, to form 3-keto-L-gulonate. The protein is 2,3-diketo-L-gulonate reductase of Escherichia coli O1:K1 / APEC.